The primary structure comprises 173 residues: Ribosome maturation factor RimM (173 aa).

In terms of domain architecture, PRC barrel spans 102-173; that stretch reads EGEYYWSDLI…TMLVDWDPEF (72 aa).

It belongs to the RimM family. As to quaternary structure, binds ribosomal protein uS19.

The protein localises to the cytoplasm. Functionally, an accessory protein needed during the final step in the assembly of 30S ribosomal subunit, possibly for assembly of the head region. Essential for efficient processing of 16S rRNA. May be needed both before and after RbfA during the maturation of 16S rRNA. It has affinity for free ribosomal 30S subunits but not for 70S ribosomes. The chain is Ribosome maturation factor RimM from Methylobacillus flagellatus (strain ATCC 51484 / DSM 6875 / VKM B-1610 / KT).